The sequence spans 544 residues: CTP synthase (544 aa).

The amidoligase domain stretch occupies residues 1–265 (MARFIFITGG…DKAVLSAFGL (265 aa)). Ser-13 serves as a coordination point for CTP. Position 13 (Ser-13) interacts with UTP. Residue 14-19 (SLGKGL) participates in ATP binding. Tyr-54 lines the L-glutamine pocket. Asp-71 is a binding site for ATP. Mg(2+)-binding residues include Asp-71 and Glu-139. CTP is bound by residues 146-148 (DIE), 186-191 (KTKPTQ), and Lys-222. UTP-binding positions include 186–191 (KTKPTQ) and Lys-222. The region spanning 291–543 (TIGVVGKYVG…VAAALKQSRL (253 aa)) is the Glutamine amidotransferase type-1 domain. Residue Gly-355 participates in L-glutamine binding. Cys-382 serves as the catalytic Nucleophile; for glutamine hydrolysis. Residues 383–386 (LGMQ), Glu-406, and Arg-471 each bind L-glutamine. Active-site residues include His-516 and Glu-518.

It belongs to the CTP synthase family. In terms of assembly, homotetramer.

It catalyses the reaction UTP + L-glutamine + ATP + H2O = CTP + L-glutamate + ADP + phosphate + 2 H(+). It carries out the reaction L-glutamine + H2O = L-glutamate + NH4(+). The enzyme catalyses UTP + NH4(+) + ATP = CTP + ADP + phosphate + 2 H(+). Its pathway is pyrimidine metabolism; CTP biosynthesis via de novo pathway; CTP from UDP: step 2/2. Allosterically activated by GTP, when glutamine is the substrate; GTP has no effect on the reaction when ammonia is the substrate. The allosteric effector GTP functions by stabilizing the protein conformation that binds the tetrahedral intermediate(s) formed during glutamine hydrolysis. Inhibited by the product CTP, via allosteric rather than competitive inhibition. Functionally, catalyzes the ATP-dependent amination of UTP to CTP with either L-glutamine or ammonia as the source of nitrogen. Regulates intracellular CTP levels through interactions with the four ribonucleotide triphosphates. In Zymomonas mobilis subsp. mobilis (strain ATCC 31821 / ZM4 / CP4), this protein is CTP synthase.